We begin with the raw amino-acid sequence, 657 residues long: Hemocyanin A chain (657 aa).

Cysteines 93 and 98 form a disulfide. N167 carries N-linked (GlcNAc...) asparagine glycosylation. Cu cation is bound by residues H194, H198, H224, H344, H348, and H384. Disulfide bonds link C483–C502 and C562–C609. A disordered region spans residues 594-616 (EGHNGGHDYGGTHAQCGVHGEAY).

This sequence belongs to the tyrosinase family. Hemocyanin subfamily. As to quaternary structure, hexamer of a number of different chains, of which A, B, and C have been identified. As to expression, hemolymph.

It is found in the secreted. The protein resides in the extracellular space. Functionally, hemocyanins are copper-containing oxygen carriers occurring freely dissolved in the hemolymph of many mollusks and arthropods. The sequence is that of Hemocyanin A chain from Panulirus interruptus (California spiny lobster).